A 102-amino-acid polypeptide reads, in one-letter code: Small ribosomal subunit protein uS10 (102 aa).

The protein belongs to the universal ribosomal protein uS10 family. In terms of assembly, part of the 30S ribosomal subunit.

Its function is as follows. Involved in the binding of tRNA to the ribosomes. In Geobacter sulfurreducens (strain ATCC 51573 / DSM 12127 / PCA), this protein is Small ribosomal subunit protein uS10.